The following is a 233-amino-acid chain: Partner of Y14 and mago (233 aa).

The interval 1–153 (MTTYSTDSQG…SNNSDSTVDE (153 aa)) is disordered. Residues 62 to 97 (EVVQKAKEKRERERLRQAREEQQRKEQQNKKQQAGA) are a coiled coil. Over residues 65–90 (QKAKEKRERERLRQAREEQQRKEQQN) the composition is skewed to basic and acidic residues. Positions 122–142 (KQPQQHTKSSQQKSTTAAAAA) are enriched in low complexity. Residues 167 to 199 (ADAQQLEVAKKLRKLRKKIREIEAIETKLRSTD) adopt a coiled-coil conformation.

Belongs to the pym family. In terms of assembly, interacts (via N-terminus) with mago and tsu/Y14; the interaction is direct.

The protein localises to the cytoplasm. It is found in the nucleus. Its function is as follows. Regulator of the exon junction complex (EJC), a multiprotein complex that associates immediately upstream of the exon-exon junction on mRNAs and serves as a positional landmarks for the intron exon structure of genes and directs post-transcriptional processes in the cytoplasm such as mRNA export, nonsense-mediated mRNA decay (NMD) or translation. This Anopheles gambiae (African malaria mosquito) protein is Partner of Y14 and mago.